The primary structure comprises 1040 residues: Multidrug resistance protein MdtB (1040 aa).

12 helical membrane-spanning segments follow: residues 25–45 (LLMA…PVAA), 347–367 (LMLA…NIPA), 369–389 (IIPG…MVFL), 396–416 (LTLM…IVVI), 440–460 (IGFT…PLLF), 472–492 (FAVT…TLTP), 537–557 (WLTL…WIVI), 863–883 (LGST…VLGV), 888–908 (FIHP…ALLA), 910–930 (IIAG…LIGI), 968–988 (ILMT…STGV), and 998–1018 (IAMV…TPVI).

Belongs to the resistance-nodulation-cell division (RND) (TC 2.A.6) family. MdtB subfamily. As to quaternary structure, part of a tripartite efflux system composed of MdtA, MdtB and MdtC. MdtB forms a heteromultimer with MdtC.

It is found in the cell inner membrane. In Salmonella paratyphi B (strain ATCC BAA-1250 / SPB7), this protein is Multidrug resistance protein MdtB.